Consider the following 59-residue polypeptide: Large ribosomal subunit protein uL30 (59 aa).

It belongs to the universal ribosomal protein uL30 family. In terms of assembly, part of the 50S ribosomal subunit.

This chain is Large ribosomal subunit protein uL30, found in Clostridium kluyveri (strain ATCC 8527 / DSM 555 / NBRC 12016 / NCIMB 10680 / K1).